The sequence spans 257 residues: Hydroxyacylglutathione hydrolase (257 aa).

Positions 58, 60, 62, 63, 116, 135, and 173 each coordinate Zn(2+).

Belongs to the metallo-beta-lactamase superfamily. Glyoxalase II family. Monomer. The cofactor is Zn(2+).

It carries out the reaction an S-(2-hydroxyacyl)glutathione + H2O = a 2-hydroxy carboxylate + glutathione + H(+). The protein operates within secondary metabolite metabolism; methylglyoxal degradation; (R)-lactate from methylglyoxal: step 2/2. Its function is as follows. Thiolesterase that catalyzes the hydrolysis of S-D-lactoyl-glutathione to form glutathione and D-lactic acid. This is Hydroxyacylglutathione hydrolase from Brucella melitensis biotype 1 (strain ATCC 23456 / CCUG 17765 / NCTC 10094 / 16M).